Here is a 334-residue protein sequence, read N- to C-terminus: Biotin synthase (334 aa).

One can recognise a Radical SAM core domain in the interval 55–285 (GEGGGVHACS…AHPSKIIKFA (231 aa)). 3 residues coordinate [4Fe-4S] cluster: C73, C77, and C80. Residues C152, C213, and K283 each coordinate [2Fe-2S] cluster.

It belongs to the radical SAM superfamily. Biotin synthase family. In terms of assembly, homodimer. [4Fe-4S] cluster serves as cofactor. The cofactor is [2Fe-2S] cluster.

The catalysed reaction is (4R,5S)-dethiobiotin + (sulfur carrier)-SH + 2 reduced [2Fe-2S]-[ferredoxin] + 2 S-adenosyl-L-methionine = (sulfur carrier)-H + biotin + 2 5'-deoxyadenosine + 2 L-methionine + 2 oxidized [2Fe-2S]-[ferredoxin]. Its pathway is cofactor biosynthesis; biotin biosynthesis; biotin from 7,8-diaminononanoate: step 2/2. In terms of biological role, catalyzes the conversion of dethiobiotin (DTB) to biotin by the insertion of a sulfur atom into dethiobiotin via a radical-based mechanism. This is Biotin synthase from Chlorobaculum parvum (strain DSM 263 / NCIMB 8327) (Chlorobium vibrioforme subsp. thiosulfatophilum).